Reading from the N-terminus, the 109-residue chain is Antifungal protein ginkbilobin-like protein (109 aa).

The Gnk2-homologous domain maps to Thr4 to Phe109. 3 disulfides stabilise this stretch: Cys11/Cys87, Cys63/Cys72, and Cys75/Cys100. Asn12 lines the alpha-D-mannopyranose pocket. Arg94 and Glu105 together coordinate alpha-D-mannopyranose.

Its function is as follows. Exerts antifungal activity through its carbohydrate-binding specificity. This is Antifungal protein ginkbilobin-like protein from Picea abies (Norway spruce).